A 564-amino-acid polypeptide reads, in one-letter code: Malignant brain tumor repeat protein 1 (564 aa).

4 MBT repeats span residues 64 to 176, 205 to 327, 331 to 442, and 450 to 549; these read FTWS…MKWL, RPTE…TKAT, LEHS…LDRL, and FKWE…LRHP.

As to quaternary structure, interacts with histone H3 that is trimethylated at 'Lys-9' (H3K9me3).

This Caenorhabditis elegans protein is Malignant brain tumor repeat protein 1 (mbtr-1).